Reading from the N-terminus, the 151-residue chain is D-aminoacyl-tRNA deacylase (151 aa).

The Gly-cisPro motif, important for rejection of L-amino acids motif lies at 138 to 139 (GP).

Belongs to the DTD family. As to quaternary structure, homodimer.

Its subcellular location is the cytoplasm. The catalysed reaction is glycyl-tRNA(Ala) + H2O = tRNA(Ala) + glycine + H(+). It catalyses the reaction a D-aminoacyl-tRNA + H2O = a tRNA + a D-alpha-amino acid + H(+). In terms of biological role, an aminoacyl-tRNA editing enzyme that deacylates mischarged D-aminoacyl-tRNAs. Also deacylates mischarged glycyl-tRNA(Ala), protecting cells against glycine mischarging by AlaRS. Acts via tRNA-based rather than protein-based catalysis; rejects L-amino acids rather than detecting D-amino acids in the active site. By recycling D-aminoacyl-tRNA to D-amino acids and free tRNA molecules, this enzyme counteracts the toxicity associated with the formation of D-aminoacyl-tRNA entities in vivo and helps enforce protein L-homochirality. In Magnetococcus marinus (strain ATCC BAA-1437 / JCM 17883 / MC-1), this protein is D-aminoacyl-tRNA deacylase.